We begin with the raw amino-acid sequence, 121 residues long: Small ribosomal subunit protein uS13 (121 aa).

The segment at 92–121 is disordered; it reads RKGLPVRGQSSKTNARTVKGPRKTVANKKK. Residues 110 to 121 are compositionally biased toward basic residues; sequence KGPRKTVANKKK.

Belongs to the universal ribosomal protein uS13 family. In terms of assembly, part of the 30S ribosomal subunit. Forms a loose heterodimer with protein S19. Forms two bridges to the 50S subunit in the 70S ribosome.

In terms of biological role, located at the top of the head of the 30S subunit, it contacts several helices of the 16S rRNA. In the 70S ribosome it contacts the 23S rRNA (bridge B1a) and protein L5 of the 50S subunit (bridge B1b), connecting the 2 subunits; these bridges are implicated in subunit movement. Contacts the tRNAs in the A and P-sites. In Mycoplasma capricolum subsp. capricolum (strain California kid / ATCC 27343 / NCTC 10154), this protein is Small ribosomal subunit protein uS13.